Consider the following 463-residue polypeptide: Methionine aminopeptidase 2-1 (463 aa).

Positions 1–98 (MGSKTPEEQI…PPRVPLSDLF (98 aa)) are disordered. The span at 30–45 (RGTHLSRDGDGSLGDH) shows a compositional bias: basic and acidic residues. The segment covering 46-55 (GDDDDADEDD) has biased composition (acidic residues). Positions 69-81 (KKKKRPKKKKKPA) are enriched in basic residues. H214 contributes to the substrate binding site. A divalent metal cation contacts are provided by D235, D246, and H315. Residue H323 participates in substrate binding. A divalent metal cation-binding residues include E348 and E444.

It belongs to the peptidase M24A family. Methionine aminopeptidase eukaryotic type 2 subfamily. Requires Co(2+) as cofactor. It depends on Zn(2+) as a cofactor. Mn(2+) serves as cofactor. The cofactor is Fe(2+).

It is found in the cytoplasm. It carries out the reaction Release of N-terminal amino acids, preferentially methionine, from peptides and arylamides.. In terms of biological role, cotranslationally removes the N-terminal methionine from nascent proteins. The N-terminal methionine is often cleaved when the second residue in the primary sequence is small and uncharged (Met-Ala-, Cys, Gly, Pro, Ser, Thr, or Val). This chain is Methionine aminopeptidase 2-1, found in Colletotrichum graminicola (strain M1.001 / M2 / FGSC 10212) (Maize anthracnose fungus).